Reading from the N-terminus, the 224-residue chain is Ribose-5-phosphate isomerase A (224 aa).

Residues 32–35 (TGST), 85–88 (DGAD), and 98–101 (KGGG) contribute to the substrate site. Residue glutamate 107 is the Proton acceptor of the active site. Lysine 125 contributes to the substrate binding site.

It belongs to the ribose 5-phosphate isomerase family. In terms of assembly, homodimer.

It catalyses the reaction aldehydo-D-ribose 5-phosphate = D-ribulose 5-phosphate. Its pathway is carbohydrate degradation; pentose phosphate pathway; D-ribose 5-phosphate from D-ribulose 5-phosphate (non-oxidative stage): step 1/1. Functionally, catalyzes the reversible conversion of ribose-5-phosphate to ribulose 5-phosphate. The sequence is that of Ribose-5-phosphate isomerase A from Pseudomonas fluorescens (strain Pf0-1).